Here is a 185-residue protein sequence, read N- to C-terminus: uncharacterized protein (185 aa).

The N-terminal 56 residues, 1-56 (MSSFTIPSPSSFSLSNSYNQTSPHSFTLRNSRSNFEFHRLRLDVESRRRSTSLRSN), are a transit peptide targeting the chloroplast. Positions 48–67 (RRSTSLRSNCSTKGTDSGEN) are disordered. Over residues 52–64 (SLRSNCSTKGTDS) the composition is skewed to polar residues. Positions 105–138 (QAEQQKQVQEIQEEVLERAKKAKERAARETMEEQ) form a coiled coil.

The protein localises to the plastid. It localises to the chloroplast. It is found in the plastoglobule. This is an uncharacterized protein from Arabidopsis thaliana (Mouse-ear cress).